A 145-amino-acid polypeptide reads, in one-letter code: Leghemoglobin (145 aa).

A Globin domain is found at 3 to 145 (GFTEKQEALV…ELAAALKKAF (143 aa)). Residues tyrosine 26 and tyrosine 31 each carry the nitrated tyrosine modification. Histidine 62 lines the O2 pocket. Heme b contacts are provided by lysine 65, histidine 93, and lysine 96. At tyrosine 134 the chain carries Nitrated tyrosine.

Belongs to the plant globin family. Monomer. Nitrated in effective nodules and particularly in hypoxic conditions; this mechanism may play a protective role in the symbiosis by buffering toxic peroxynitrite NO(2)(-). Nitration level decrease during nodule senescence. In terms of tissue distribution, root nodules.

It localises to the cytoplasm. The protein localises to the cytosol. It is found in the nucleus. Functionally, leghemoglobin that reversibly binds oxygen O(2) through a pentacoordinated heme iron. In root nodules, facilitates the diffusion of oxygen to the bacteroids while preventing the bacterial nitrogenase from being inactivated by buffering dioxygen, nitric oxide and carbon monoxide, and promoting the formation of reactive oxygen species (ROS, e.g. H(2)O(2)). This role is essential for symbiotic nitrogen fixation (SNF). The sequence is that of Leghemoglobin from Psophocarpus tetragonolobus (Winged bean).